The primary structure comprises 883 residues: DNA double-strand break repair Rad50 ATPase (883 aa).

ATP contacts are provided by residues Arg-12, 32–38 (NGSGKSS), and Gln-134. A coiled-coil region spans residues 218–420 (ELRGELGGLE…EIGSRRGELK (203 aa)). The 98-residue stretch at 395–492 (IQKARERKEE…ELVEVEKTLK (98 aa)) folds into the Zinc-hook domain. Residues Cys-440 and Cys-443 each coordinate Zn(2+). Coiled-coil stretches lie at residues 452 to 585 (RKEL…KKLG) and 620 to 741 (EDLL…LLKE). ATP is bound at residue 790–795 (FLSGGE).

It belongs to the SMC family. RAD50 subfamily. Homodimer. Forms a heterotetramer composed of two Mre11 subunits and two Rad50 subunits. It depends on Zn(2+) as a cofactor.

Part of the Rad50/Mre11 complex, which is involved in the early steps of DNA double-strand break (DSB) repair. The complex may facilitate opening of the processed DNA ends to aid in the recruitment of HerA and NurA. Rad50 controls the balance between DNA end bridging and DNA resection via ATP-dependent structural rearrangements of the Rad50/Mre11 complex. This chain is DNA double-strand break repair Rad50 ATPase, found in Thermococcus kodakarensis (strain ATCC BAA-918 / JCM 12380 / KOD1) (Pyrococcus kodakaraensis (strain KOD1)).